Consider the following 595-residue polypeptide: Phosphomethylpyrimidine synthase (595 aa).

The span at 97–120 shows a compositional bias: basic and acidic residues; that stretch reads GRDVRPEDNGFTKDDDPRAAREVF. The segment at 97–134 is disordered; it reads GRDVRPEDNGFTKDDDPRAAREVFPRTSSHKPLRAKKG. Basic residues predominate over residues 124–133; sequence SSHKPLRAKK. Residues N202, M231, Y260, H296, 316–318, 357–360, and E396 each bind substrate; these read SRG and DGLR. H400 serves as a coordination point for Zn(2+). Y423 provides a ligand contact to substrate. Position 464 (H464) interacts with Zn(2+). [4Fe-4S] cluster contacts are provided by C544, C547, and C552.

It belongs to the ThiC family. It depends on [4Fe-4S] cluster as a cofactor.

The enzyme catalyses 5-amino-1-(5-phospho-beta-D-ribosyl)imidazole + S-adenosyl-L-methionine = 4-amino-2-methyl-5-(phosphooxymethyl)pyrimidine + CO + 5'-deoxyadenosine + formate + L-methionine + 3 H(+). It participates in cofactor biosynthesis; thiamine diphosphate biosynthesis. Functionally, catalyzes the synthesis of the hydroxymethylpyrimidine phosphate (HMP-P) moiety of thiamine from aminoimidazole ribotide (AIR) in a radical S-adenosyl-L-methionine (SAM)-dependent reaction. This chain is Phosphomethylpyrimidine synthase, found in Halalkalibacterium halodurans (strain ATCC BAA-125 / DSM 18197 / FERM 7344 / JCM 9153 / C-125) (Bacillus halodurans).